The primary structure comprises 41 residues: Large ribosomal subunit protein bL36 (41 aa).

This sequence belongs to the bacterial ribosomal protein bL36 family.

This is Large ribosomal subunit protein bL36 from Rickettsia prowazekii (strain Madrid E).